A 239-amino-acid polypeptide reads, in one-letter code: Protein UL20 homolog (239 aa).

3 consecutive transmembrane segments (helical) span residues 65 to 81, 140 to 156, and 189 to 208; these read PSFS…ALVI, FVIG…FMVV, and LMPL…STAV.

This sequence belongs to the alphaherpesvirinae UL20 family. Interacts with gK (via N-terminus); this interaction plays a role in the coordinate transport of UL20 and gK to the trans-Golgi network (TGN), and is required for their cell surface expression. Interacts with gB.

Its subcellular location is the virion. It localises to the host cell membrane. The protein localises to the host endosome membrane. It is found in the host Golgi apparatus membrane. The protein resides in the host nucleus membrane. Functionally, plays an essential role in egress of virus particles from the nucleus, cytoplasmic envelopment and virus-induced cell fusion. Forms a functional protein complex with gK and this interaction is absolutely essential for their coordinate intracellular transport, gK glycosylation, expression on host cell surface, and function. Together, they modulate gB-mediated virus-induced cell fusion and virion egress and therefore actively participate in these processes. This Equus caballus (Horse) protein is Protein UL20 homolog.